We begin with the raw amino-acid sequence, 33 residues long: Pardaxin P-2 (33 aa).

It belongs to the pardaxin family. As to quaternary structure, in aqueous solution exists as a tetramer.

Its subcellular location is the secreted. It localises to the target cell membrane. Exhibits unusual shark repellent and surfactant properties. Forms voltage-dependent, ion-permeable channels in membranes. At high concentration causes cell membrane lysis. The protein is Pardaxin P-2 of Pardachirus pavoninus (Peacock sole).